The following is a 156-amino-acid chain: Small ribosomal subunit protein uS7 (156 aa).

The protein belongs to the universal ribosomal protein uS7 family. Part of the 30S ribosomal subunit. Contacts proteins S9 and S11.

One of the primary rRNA binding proteins, it binds directly to 16S rRNA where it nucleates assembly of the head domain of the 30S subunit. Is located at the subunit interface close to the decoding center, probably blocks exit of the E-site tRNA. This chain is Small ribosomal subunit protein uS7, found in Bacillus licheniformis (strain ATCC 14580 / DSM 13 / JCM 2505 / CCUG 7422 / NBRC 12200 / NCIMB 9375 / NCTC 10341 / NRRL NRS-1264 / Gibson 46).